The primary structure comprises 370 residues: Aldo-keto reductase NECHADRAFT_45914 (370 aa).

NADP(+) is bound at residue D78. Catalysis depends on Y83, which acts as the Proton donor. Substrate is bound at residue H174. NADP(+) is bound by residues 204–205 (SS), Q230, 259–269 (APLASGRLARR), and 333–341 (STVQRIEEA).

This sequence belongs to the aldo/keto reductase family.

It participates in secondary metabolite biosynthesis. Functionally, aldo-keto reductase; part of the gene cluster that mediates the biosynthesis of sansalvamide, a cyclic pentadepsipeptide that shows promising results as potential anti-cancer drug. The nonribosmal peptide synthetase NRPS30 produces sansalvamide by incorporating successively one phenylalanine, one leucine, one alpha-hydroxyisocaproic acid (HICA), one valine and one leucine before sansalvamide is released from by cyclization by the terminal C domain of NRPS30. The HICA residue is probably provided by reduction of alpha-ketoisocaproate by the cluster-specific aldo-keto reductase (NECHADRAFT_45914). This is Aldo-keto reductase NECHADRAFT_45914 from Fusarium vanettenii (strain ATCC MYA-4622 / CBS 123669 / FGSC 9596 / NRRL 45880 / 77-13-4) (Fusarium solani subsp. pisi).